We begin with the raw amino-acid sequence, 423 residues long: UDP-N-acetylglucosamine 1-carboxyvinyltransferase (423 aa).

22-23 (KN) lines the phosphoenolpyruvate pocket. Arg-98 provides a ligand contact to UDP-N-acetyl-alpha-D-glucosamine. The active-site Proton donor is Cys-122. A 2-(S-cysteinyl)pyruvic acid O-phosphothioketal modification is found at Cys-122. Residues 127–131 (RPVDQ), Asp-311, and Ile-333 each bind UDP-N-acetyl-alpha-D-glucosamine.

Belongs to the EPSP synthase family. MurA subfamily.

Its subcellular location is the cytoplasm. It catalyses the reaction phosphoenolpyruvate + UDP-N-acetyl-alpha-D-glucosamine = UDP-N-acetyl-3-O-(1-carboxyvinyl)-alpha-D-glucosamine + phosphate. The protein operates within cell wall biogenesis; peptidoglycan biosynthesis. Cell wall formation. Adds enolpyruvyl to UDP-N-acetylglucosamine. The chain is UDP-N-acetylglucosamine 1-carboxyvinyltransferase from Stenotrophomonas maltophilia (strain R551-3).